The sequence spans 316 residues: HPr kinase/phosphorylase (316 aa).

Active-site residues include histidine 143 and lysine 164. 158–165 contributes to the ATP binding site; sequence GEAGSGKS. Serine 165 is a Mg(2+) binding site. The active-site Proton acceptor; for phosphorylation activity. Proton donor; for dephosphorylation activity is aspartate 182. Positions 206–215 are important for the catalytic mechanism of both phosphorylation and dephosphorylation; the sequence is LEVRGLGVLN. Residue glutamate 207 participates in Mg(2+) binding. Arginine 251 is an active-site residue. Residues 272 to 277 are important for the catalytic mechanism of dephosphorylation; sequence PVMPGR.

It belongs to the HPrK/P family. In terms of assembly, homohexamer. Requires Mg(2+) as cofactor.

It catalyses the reaction [HPr protein]-L-serine + ATP = [HPr protein]-O-phospho-L-serine + ADP + H(+). The enzyme catalyses [HPr protein]-O-phospho-L-serine + phosphate + H(+) = [HPr protein]-L-serine + diphosphate. Functionally, catalyzes the ATP- as well as the pyrophosphate-dependent phosphorylation of a specific serine residue in HPr, a phosphocarrier protein of the phosphoenolpyruvate-dependent sugar phosphotransferase system (PTS). HprK/P also catalyzes the pyrophosphate-producing, inorganic phosphate-dependent dephosphorylation (phosphorolysis) of seryl-phosphorylated HPr (P-Ser-HPr). The polypeptide is HPr kinase/phosphorylase (Xanthomonas euvesicatoria pv. vesicatoria (strain 85-10) (Xanthomonas campestris pv. vesicatoria)).